An 835-amino-acid chain; its full sequence is Ribonucleoside-diphosphate reductase large subunit (835 aa).

The tract at residues 1–39 (MPPRAPRPAGAVSPPFPPLAGPPLKARAPRARDSPLTSP) is disordered. Substrate-binding positions include Thr262, 277–278 (SC), Gly308, 489–493 (NLCTE), and 666–670 (PTVSS). Cys278 and Cys506 are joined by a disulfide. Residue Asn489 is the Proton acceptor of the active site. The active-site Cysteine radical intermediate is the Cys491. The Proton acceptor role is filled by Glu493.

Belongs to the ribonucleoside diphosphate reductase large chain family. In terms of assembly, heterotetramer composed of a homodimer of the large subunit (R1) and a homodimer of the small subunit (R2). Larger multisubunit protein complex are also active, composed of (R1)n(R2)n.

The catalysed reaction is a 2'-deoxyribonucleoside 5'-diphosphate + [thioredoxin]-disulfide + H2O = a ribonucleoside 5'-diphosphate + [thioredoxin]-dithiol. Ribonucleoside-diphosphate reductase holoenzyme provides the precursors necessary for viral DNA synthesis. Allows virus growth in non-dividing cells, as well as reactivation from latency in infected hosts. Catalyzes the biosynthesis of deoxyribonucleotides from the corresponding ribonucleotides. The chain is Ribonucleoside-diphosphate reductase large subunit from Suid herpesvirus 1 (strain Kaplan) (SuHV-1).